A 552-amino-acid polypeptide reads, in one-letter code: Membrane protein insertase YidC (552 aa).

Residues 6-26 (NLLLAAIAAVILMLFIRWNHF) form a helical membrane-spanning segment. Composition is skewed to polar residues over residues 32 to 41 (QHQAGNTPAG) and 60 to 70 (PTASDTPQATA). The interval 32 to 70 (QHQAGNTPAGSSIAAIAPDSNGDIPSAVPTASDTPQATA) is disordered. 4 helical membrane-spanning segments follow: residues 365–387 (WGLA…SAAS), 431–451 (FGGC…YWVL), 472–492 (MDPY…MQKL), and 508–528 (LPFV…LYWV).

The protein belongs to the OXA1/ALB3/YidC family. Type 1 subfamily. As to quaternary structure, interacts with the Sec translocase complex via SecD. Specifically interacts with transmembrane segments of nascent integral membrane proteins during membrane integration.

The protein resides in the cell inner membrane. Functionally, required for the insertion and/or proper folding and/or complex formation of integral membrane proteins into the membrane. Involved in integration of membrane proteins that insert both dependently and independently of the Sec translocase complex, as well as at least some lipoproteins. Aids folding of multispanning membrane proteins. This Cellvibrio japonicus (strain Ueda107) (Pseudomonas fluorescens subsp. cellulosa) protein is Membrane protein insertase YidC.